We begin with the raw amino-acid sequence, 366 residues long: A-type ATP synthase subunit C (366 aa).

This sequence belongs to the V-ATPase V0D/AC39 subunit family. In terms of assembly, has multiple subunits with at least A(3), B(3), C, D, E, F, H, I and proteolipid K(x).

The protein resides in the cell membrane. Functionally, component of the A-type ATP synthase that produces ATP from ADP in the presence of a proton gradient across the membrane. The protein is A-type ATP synthase subunit C of Thermococcus gammatolerans (strain DSM 15229 / JCM 11827 / EJ3).